Here is a 289-residue protein sequence, read N- to C-terminus: Glucose and ribitol dehydrogenase homolog 2 (289 aa).

The interval 1-32 (MASGFPPQKQETQPGIQHVMEPTPEFSSSNYK) is disordered. 43–67 (LVTGGDSGIGKAVCHCYALEGASVA) contributes to the NAD(+) binding site. Ser180 lines the substrate pocket. Residue Tyr193 is the Proton acceptor of the active site.

The protein belongs to the short-chain dehydrogenases/reductases (SDR) family.

Functionally, may act as a short alcohol-polyol-sugar dehydrogenase possibly related to carbohydrate metabolism and the acquisition of desiccation tolerance. May also be involved in signal transduction. This chain is Glucose and ribitol dehydrogenase homolog 2, found in Arabidopsis thaliana (Mouse-ear cress).